Here is a 402-residue protein sequence, read N- to C-terminus: N-acetyltransferase Eis (402 aa).

The N-acetyltransferase domain maps to 3-154 (VTLCSPTEDD…RFARFHADAP (152 aa)). Residues 85 to 87 (VAV), 93 to 98 (RRGLLR), and 121 to 122 (SE) each bind acetyl-CoA. The active-site Proton donor is the Y126. F402 (proton acceptor; via carboxylate) is an active-site residue.

It belongs to the acetyltransferase Eis family. Homohexamer; trimer of dimers.

It is found in the secreted. The protein resides in the host cytoplasmic vesicle. Its subcellular location is the host phagosome. It localises to the extracellular vesicle. The protein localises to the bacterial extracellular vesicle. It is found in the host extracellular space. It catalyses the reaction L-lysyl-[protein] + acetyl-CoA = N(6)-acetyl-L-lysyl-[protein] + CoA + H(+). Its function is as follows. Effector that is released into the host cell and affects host immune responses. Acts as an acetyltransferase that acetylates lysine residues of host proteins. This chain is N-acetyltransferase Eis, found in Mycobacterium bovis (strain ATCC BAA-935 / AF2122/97).